Here is a 140-residue protein sequence, read N- to C-terminus: Putative pre-16S rRNA nuclease (140 aa).

It belongs to the YqgF nuclease family.

It localises to the cytoplasm. Could be a nuclease involved in processing of the 5'-end of pre-16S rRNA. This is Putative pre-16S rRNA nuclease from Lachnospira eligens (strain ATCC 27750 / DSM 3376 / VPI C15-48 / C15-B4) (Eubacterium eligens).